Reading from the N-terminus, the 417-residue chain is NADH-quinone oxidoreductase subunit D (417 aa).

This sequence belongs to the complex I 49 kDa subunit family. NDH-1 is composed of 14 different subunits. Subunits NuoB, C, D, E, F, and G constitute the peripheral sector of the complex.

It is found in the cell inner membrane. It catalyses the reaction a quinone + NADH + 5 H(+)(in) = a quinol + NAD(+) + 4 H(+)(out). NDH-1 shuttles electrons from NADH, via FMN and iron-sulfur (Fe-S) centers, to quinones in the respiratory chain. The immediate electron acceptor for the enzyme in this species is believed to be ubiquinone. Couples the redox reaction to proton translocation (for every two electrons transferred, four hydrogen ions are translocated across the cytoplasmic membrane), and thus conserves the redox energy in a proton gradient. In Alkalilimnicola ehrlichii (strain ATCC BAA-1101 / DSM 17681 / MLHE-1), this protein is NADH-quinone oxidoreductase subunit D.